A 155-amino-acid polypeptide reads, in one-letter code: Small ribosomal subunit protein uS7c (155 aa).

It belongs to the universal ribosomal protein uS7 family. As to quaternary structure, part of the 30S ribosomal subunit.

It localises to the plastid. The protein localises to the chloroplast. In terms of biological role, one of the primary rRNA binding proteins, it binds directly to 16S rRNA where it nucleates assembly of the head domain of the 30S subunit. The sequence is that of Small ribosomal subunit protein uS7c (rps7) from Pinus thunbergii (Japanese black pine).